Consider the following 109-residue polypeptide: Histidine-rich carboxyl terminus protein 1 (109 aa).

The helical transmembrane segment at 13–33 (WITGTALAFLMLLWLMALCLF) threads the bilayer. The interval 77 to 109 (TSVGVHHHHHHSPHRLHHHKHHHRHHHAHGARR) is disordered. Residues 81 to 109 (VHHHHHHSPHRLHHHKHHHRHHHAHGARR) are compositionally biased toward basic residues.

The protein resides in the membrane. In Mus musculus (Mouse), this protein is Histidine-rich carboxyl terminus protein 1 (Hrct1).